The sequence spans 757 residues: Inhibitor of nuclear factor kappa-B kinase subunit beta (757 aa).

The Protein kinase domain occupies 15–300 (WEMKERLGTG…DPQYGPNGCF (286 aa)). ATP is bound by residues 21 to 29 (LGTGGFGNV) and K44. The active-site Proton acceptor is the D145. K163 participates in a covalent cross-link: Glycyl lysine isopeptide (Lys-Gly) (interchain with G-Cter in ubiquitin). S177 carries the post-translational modification Phosphoserine; by TBK1 and PKC/PRKCZ. The residue at position 179 (C179) is an S-nitrosocysteine. Residue S181 is modified to Phosphoserine; by TBK1, PKC/PRKCZ and PDPK1. The residue at position 191 (P191) is a Hydroxyproline. Residues 458-479 (LLRNNSCLSKMKNAMASTAQQL) are leucine-zipper. S670 carries the phosphoserine; by autocatalysis modification. At S672 the chain carries Phosphoserine. 8 positions are modified to phosphoserine; by autocatalysis: S675, S682, S689, S692, S697, S705, S733, and S740. Positions 682 to 703 (SHPGHLMSQPSSACDSLPDSDK) are disordered. Positions 737 to 742 (LDWSWL) are NEMO-binding.

This sequence belongs to the protein kinase superfamily. Ser/Thr protein kinase family. I-kappa-B kinase subfamily. As to quaternary structure, component of the I-kappa-B-kinase (IKK) core complex consisting of CHUK, IKBKB and IKBKG; probably four alpha/CHUK-beta/IKBKB dimers are associated with four gamma/IKBKG subunits. The IKK core complex seems to associate with regulatory or adapter proteins to form a IKK-signalosome holo-complex. The IKK complex associates with TERF2IP/RAP1, leading to promote IKK-mediated phosphorylation of RELA/p65. Part of a complex composed of NCOA2, NCOA3, CHUK/IKKA, IKBKB, IKBKG and CREBBP. Part of a 70-90 kDa complex at least consisting of CHUK/IKKA, IKBKB, NFKBIA, RELA, ELP1 and MAP3K14. Found in a membrane raft complex, at least composed of BCL10, CARD11, DPP4 and IKBKB. Interacts with SQSTM1 through PRKCZ or PRKCI. Forms an NGF-induced complex with IKBKB, PRKCI and TRAF6. May interact with MAVS/IPS1. Interacts with NALP2. Interacts with TICAM1. Interacts with FAF1; the interaction disrupts the IKK complex formation. Interacts with ATM. Part of a ternary complex consisting of TANK, IKBKB and IKBKG. Interacts with NIBP; the interaction is direct. Interacts with ARRB1 and ARRB2. Interacts with TRIM21. Interacts with NLRC5; prevents IKBKB phosphorylation and kinase activity. Interacts with PDPK1. Interacts with EIF2AK2/PKR. The phosphorylated form interacts with PPM1A and PPM1B. Interacts with ZNF268 isoform 2; the interaction is further increased in a TNF-alpha-dependent manner. Interacts with IKBKE. Interacts with ZC3H12A. Interacts with AKAP13. Interacts with LRRC14; disrupts IKBKB-IKBKG interaction preventing I-kappa-B-kinase (IKK) core complex formation and leading to a decrease of IKBKB phosphorylation and NF-kappaB activation. Interacts with SASH1. Interacts with ARFIP2. Interacts with FKBP5. In terms of processing, upon cytokine stimulation, phosphorylated on Ser-177 and Ser-181 by MEKK1 and/or MAP3K14/NIK as well as TBK1 and PRKCZ; which enhances activity. Phosphorylated by MAP3K7/TAK1 in response to NOD1 and NOD2 signaling, promoting activation and phosphorylation of NF-kappa-B inhibitors, leading to NF-kappa-B activation. Once activated, autophosphorylates on the C-terminal serine cluster; which decreases activity and prevents prolonged activation of the inflammatory response. Phosphorylated by the IKK-related kinases TBK1 and IKBKE, which is associated with reduced CHUK/IKKA and IKBKB activity and NF-kappa-B-dependent gene transcription. Dephosphorylated at Ser-177 and Ser-181 by PPM1A and PPM1B. Post-translationally, ubiquitinated. Monoubiquitination involves TRIM21 that leads to inhibition of Tax-induced NF-kappa-B signaling. 'Ser-163' may not serve as a monoubiquitination site. Ubiquitination on 'Ser-163' may modulate phosphorylation on C-terminal serine residues. Hydroxylated by PHD1/EGLN2, loss of hydroxylation under hypoxic conditions results in activation of NF-kappa-B.

Its subcellular location is the cytoplasm. The protein resides in the nucleus. It localises to the membrane raft. The enzyme catalyses L-seryl-[I-kappa-B protein] + ATP = O-phospho-L-seryl-[I-kappa-B protein] + ADP + H(+). It carries out the reaction L-seryl-[protein] + ATP = O-phospho-L-seryl-[protein] + ADP + H(+). The catalysed reaction is L-threonyl-[protein] + ATP = O-phospho-L-threonyl-[protein] + ADP + H(+). Its function is as follows. Serine kinase that plays an essential role in the NF-kappa-B signaling pathway which is activated by multiple stimuli such as inflammatory cytokines, bacterial or viral products, DNA damages or other cellular stresses. Acts as a part of the canonical IKK complex in the conventional pathway of NF-kappa-B activation. Phosphorylates inhibitors of NF-kappa-B on 2 critical serine residues. These modifications allow polyubiquitination of the inhibitors and subsequent degradation by the proteasome. In turn, free NF-kappa-B is translocated into the nucleus and activates the transcription of hundreds of genes involved in immune response, growth control, or protection against apoptosis. In addition to the NF-kappa-B inhibitors, phosphorylates several other components of the signaling pathway including NEMO/IKBKG, NF-kappa-B subunits RELA and NFKB1, as well as IKK-related kinases TBK1 and IKBKE. IKK-related kinase phosphorylations may prevent the overproduction of inflammatory mediators since they exert a negative regulation on canonical IKKs. Phosphorylates FOXO3, mediating the TNF-dependent inactivation of this pro-apoptotic transcription factor. Also phosphorylates other substrates including NAA10, NCOA3, BCL10 and IRS1. Phosphorylates RIPK1 at 'Ser-25' which represses its kinase activity and consequently prevents TNF-mediated RIPK1-dependent cell death. Phosphorylates the C-terminus of IRF5, stimulating IRF5 homodimerization and translocation into the nucleus. The sequence is that of Inhibitor of nuclear factor kappa-B kinase subunit beta (Ikbkb) from Rattus norvegicus (Rat).